We begin with the raw amino-acid sequence, 365 residues long: MSSAPPRSPTPRAPKMKKDESFLGKLGGTLARKKKTREVTDLQEEGKSAINSPMAPALVDIHPEDTQLEENEERTMIDPTSREDPKFKELVKVLLDWINDVLAEERIIVKQLEEDLYDGQVLQKLLEKLAHCKLNVAEVTQSEIGQKQKLQTVLEAVQDLLRPHGWPLRWNVDSIHGKNLVAILHLLVSLAMHFRAPIHLPEHVTVQVVVVRKREGLLHSSHISEELTTTTEIMMGRFERDAFDTLFDHAPDKLNLVKKSLITFVNKHLNKLNLEVTDLETQFADGVYLVLLLGLLEDYFVPLHNFYLTPDSFDQKVHNVAFAFELMLDGGLKKPKARPEDVVNLDLKSTLRVLYTLFTKYKDVE.

A compositionally biased stretch (pro residues) spans 1 to 12 (MSSAPPRSPTPR). Residues 1–52 (MSSAPPRSPTPRAPKMKKDESFLGKLGGTLARKKKTREVTDLQEEGKSAINS) are disordered. Position 8 is a phosphoserine (S8). The segment covering 37 to 47 (REVTDLQEEGK) has biased composition (basic and acidic residues). Calponin-homology (CH) domains lie at 88–195 (KELV…MHFR) and 255–362 (NLVK…TKYK).

This sequence belongs to the parvin family. In terms of assembly, interacts with ILK, ARHGEF6, PXN (via LD motifs), ACTN2 and actin. Interacts with DYSF. Phosphorylated by ILK. Expressed predominantly in heart and moderately in spleen, lung and skeletal muscle.

The protein localises to the cell junction. The protein resides in the focal adhesion. It localises to the cell membrane. Its subcellular location is the cytoplasm. It is found in the cytoskeleton. The protein localises to the cell projection. The protein resides in the lamellipodium. It localises to the myofibril. Its subcellular location is the sarcomere. It is found in the z line. Its function is as follows. Adapter protein that plays a role in integrin signaling via ILK and in activation of the GTPases CDC42 and RAC1 by guanine exchange factors, such as ARHGEF6. Is involved in the reorganization of the actin cytoskeleton and formation of lamellipodia. Plays a role in cell adhesion, cell spreading, establishment or maintenance of cell polarity, and cell migration. This Mus musculus (Mouse) protein is Beta-parvin (Parvb).